A 275-amino-acid chain; its full sequence is Ribosome biogenesis protein RLP7 (275 aa).

The segment at 14–45 (KRKNNDRKRLEKQEQARQRQLEQKKKNDQRSK) is disordered. Residues 20–44 (RKRLEKQEQARQRQLEQKKKNDQRS) show a composition bias toward basic and acidic residues.

Belongs to the universal ribosomal protein uL30 family.

The protein resides in the nucleus. The protein localises to the nucleolus. Functionally, involved in the biogenesis of the 60S ribosomal subunit. May act as a specificity factor that binds precursor rRNAs and tethers the enzymes that carry out the early 5' to 3' exonucleolytic reactions that generate the mature rRNAs. In Debaryomyces hansenii (strain ATCC 36239 / CBS 767 / BCRC 21394 / JCM 1990 / NBRC 0083 / IGC 2968) (Yeast), this protein is Ribosome biogenesis protein RLP7 (RLP7).